The sequence spans 189 residues: Peptidyl-tRNA hydrolase (189 aa).

Tyrosine 15 provides a ligand contact to tRNA. Catalysis depends on histidine 20, which acts as the Proton acceptor. Phenylalanine 66, asparagine 68, and asparagine 114 together coordinate tRNA.

Belongs to the PTH family. In terms of assembly, monomer.

It is found in the cytoplasm. The enzyme catalyses an N-acyl-L-alpha-aminoacyl-tRNA + H2O = an N-acyl-L-amino acid + a tRNA + H(+). Its function is as follows. Hydrolyzes ribosome-free peptidyl-tRNAs (with 1 or more amino acids incorporated), which drop off the ribosome during protein synthesis, or as a result of ribosome stalling. Catalyzes the release of premature peptidyl moieties from peptidyl-tRNA molecules trapped in stalled 50S ribosomal subunits, and thus maintains levels of free tRNAs and 50S ribosomes. In Streptococcus mutans serotype c (strain ATCC 700610 / UA159), this protein is Peptidyl-tRNA hydrolase.